We begin with the raw amino-acid sequence, 131 residues long: DNA-binding protein inhibitor ID-4 (131 aa).

Residues A36–L88 enclose the bHLH domain.

As to quaternary structure, heterodimer with other HLH proteins. In terms of tissue distribution, during embryonic development, expressed in a number of neural tissues, including Rohon-Beard neurons, olfactory placode, eye primordia, and the trigeminal ganglia. Also expressed in other organs including the pronephros and liver primordium. Pronephric development begins by stage 25 and increases during tailbud stages. Expressed in both the tubules and the duct. As embryogenesis progresses, expressed in the migrating melanocytes and lateral line structures.

It is found in the nucleus. In terms of biological role, transcriptional regulator (lacking a basic DNA binding domain) which negatively regulates the basic helix-loop-helix (bHLH) transcription factors by forming heterodimers and inhibiting their DNA binding and transcriptional activity. Inhibits the activity of both neurogenic (neurog1/neurogenin, neurod1/neuroD) and myogenic (myod1/myoD) bHLH factors. This Xenopus laevis (African clawed frog) protein is DNA-binding protein inhibitor ID-4.